Reading from the N-terminus, the 109-residue chain is uncharacterized protein (109 aa).

The first 23 residues, 1–23 (MKNYNFILISLFIIFFIILNISS), serve as a signal peptide directing secretion. Asn-27 carries an N-linked (GlcNAc...) asparagine glycan. A disordered region spans residues 45 to 109 (YQEYMENRTP…KKDQQNQQQN (65 aa)). A compositionally biased stretch (low complexity) spans 54-72 (PNEQQQQQQQQQNNNNPPQ). Residues 94–103 (KLKEKLKKDQ) show a composition bias toward basic and acidic residues.

It localises to the secreted. This is an uncharacterized protein from Dictyostelium discoideum (Social amoeba).